The chain runs to 183 residues: Inosine/xanthosine triphosphatase (183 aa).

D75 contacts Mg(2+). 75–76 contacts substrate; sequence DG.

This sequence belongs to the YjjX NTPase family. In terms of assembly, homodimer. The cofactor is Mg(2+). Mn(2+) serves as cofactor.

The enzyme catalyses XTP + H2O = XDP + phosphate + H(+). It carries out the reaction ITP + H2O = IDP + phosphate + H(+). Phosphatase that hydrolyzes non-canonical purine nucleotides such as XTP and ITP to their respective diphosphate derivatives. Probably excludes non-canonical purines from DNA/RNA precursor pool, thus preventing their incorporation into DNA/RNA and avoiding chromosomal lesions. This Vibrio vulnificus (strain CMCP6) protein is Inosine/xanthosine triphosphatase.